We begin with the raw amino-acid sequence, 140 residues long: 3-hydroxyacyl-[acyl-carrier-protein] dehydratase FabZ (140 aa).

Histidine 48 is an active-site residue.

This sequence belongs to the thioester dehydratase family. FabZ subfamily.

The protein resides in the cytoplasm. The enzyme catalyses a (3R)-hydroxyacyl-[ACP] = a (2E)-enoyl-[ACP] + H2O. Involved in unsaturated fatty acids biosynthesis. Catalyzes the dehydration of short chain beta-hydroxyacyl-ACPs and long chain saturated and unsaturated beta-hydroxyacyl-ACPs. In Exiguobacterium sibiricum (strain DSM 17290 / CCUG 55495 / CIP 109462 / JCM 13490 / 255-15), this protein is 3-hydroxyacyl-[acyl-carrier-protein] dehydratase FabZ.